The primary structure comprises 351 residues: Flagellar P-ring protein (351 aa).

The signal sequence occupies residues 1–20; it reads MKKILFLFTASLLLHVTLQA.

This sequence belongs to the FlgI family. The basal body constitutes a major portion of the flagellar organelle and consists of four rings (L,P,S, and M) mounted on a central rod.

It localises to the periplasm. Its subcellular location is the bacterial flagellum basal body. Assembles around the rod to form the L-ring and probably protects the motor/basal body from shearing forces during rotation. The protein is Flagellar P-ring protein of Sulfurimonas denitrificans (strain ATCC 33889 / DSM 1251) (Thiomicrospira denitrificans (strain ATCC 33889 / DSM 1251)).